A 747-amino-acid chain; its full sequence is MTDTSDARPPHSDDKTRSHSESENPAIDSPEPKVHAPLTNKDWWPEQVDVSVLHKQNEKGNPLGEDFDYATEFAKLDVEAFKRDVIDLINTSQDWWPADYGSYAGLFIRMSWHAAGTYRIFDGRGGAGQGSQRFAPLNSWPDNANLDKARRLLWPIKRKYGNKISWADLIAYAGNAALESAGFQTFGFAFGREDIWEPEEMLWGQEDTWLGTDKRYGGTNDSDTRELAEPFGATTMGLIYVNPEGPEGKPDPLAAAHDIRETFGRMAMNDEETAALIVGGHTLGKTHGAADVNVGPEPEGAPIEQQGLGWKCPFGTGNAGDTVTSGLEVVWTTTPTKWSNAYLELLYGYEWELTKSPGGAWQFEAKDAEAIIPDPFGGPPRKPTMLVTDVSMRVDPIYGPITRRWLDHPEEMNEAFAKAWYKLMHRDMGPVSRYLGPWVAEPQLWQDPVPAVDHELIDESDIAALKAAVLQSGLSVPQLVKTAWASASSFRGTDKRGGANGARLRLEPQRSWEANEPSELDKVLPVLERIQQDFNASATGGKKVSLADLIVLAGSAAVEKAAKDGGYEISVHFAPGRTDASQEQTDVDSFAVLEPRADGFRNFARPGEKTPLEQLLVDKAYFLDLTAPEMTALIGGLRTLNANHGGSKHGVFTERPGVLSNDFFVNLLDMGTEWKPSELTENVYDGKDRATGQPKWTATAADLVFGSNSVLRAVVEVYAQDDNQGKFVEDFVAAWVKVMNNDRFDLG.

The segment covering 1 to 22 (MTDTSDARPPHSDDKTRSHSES) has biased composition (basic and acidic residues). The segment at 1-39 (MTDTSDARPPHSDDKTRSHSESENPAIDSPEPKVHAPLT) is disordered. The segment at residues 112–240 (WHAAGTYRIF…FGATTMGLIY (129 aa)) is a cross-link (tryptophyl-tyrosyl-methioninium (Trp-Tyr) (with M-266)). Histidine 113 (proton acceptor) is an active-site residue. Residues 240-266 (YVNPEGPEGKPDPLAAAHDIRETFGRM) constitute a cross-link (tryptophyl-tyrosyl-methioninium (Tyr-Met) (with W-112)). Histidine 281 is a heme b binding site.

This sequence belongs to the peroxidase family. Peroxidase/catalase subfamily. As to quaternary structure, homodimer or homotetramer. Requires heme b as cofactor. Post-translationally, formation of the three residue Trp-Tyr-Met cross-link is important for the catalase, but not the peroxidase activity of the enzyme.

It catalyses the reaction H2O2 + AH2 = A + 2 H2O. The enzyme catalyses 2 H2O2 = O2 + 2 H2O. Bifunctional enzyme with both catalase and broad-spectrum peroxidase activity. The chain is Catalase-peroxidase 1 from Mycolicibacterium vanbaalenii (strain DSM 7251 / JCM 13017 / BCRC 16820 / KCTC 9966 / NRRL B-24157 / PYR-1) (Mycobacterium vanbaalenii).